The sequence spans 204 residues: Putative AgrB-like protein (204 aa).

A run of 5 helical transmembrane segments spans residues 52 to 74, 87 to 107, 111 to 131, 151 to 168, and 173 to 190; these read YGIA…YLWL, LNCT…FQNI, NWIV…FAPA, AMIG…IPFA, and LIMV…PLTY.

It belongs to the AgrB family.

The protein resides in the cell membrane. Its function is as follows. May be involved in the proteolytic processing of a quorum sensing system signal molecule precursor. The protein is Putative AgrB-like protein of Listeria monocytogenes serovar 1/2a (strain ATCC BAA-679 / EGD-e).